The sequence spans 183 residues: uncharacterized protein (183 aa).

This is an uncharacterized protein from Saccharolobus islandicus (Sulfolobus islandicus).